Reading from the N-terminus, the 106-residue chain is ATP-dependent Clp protease adapter protein ClpS (106 aa).

The disordered stretch occupies residues 1–22 (MNEYHNSLKSKESVKDERQQKL). The span at 9 to 20 (KSKESVKDERQQ) shows a compositional bias: basic and acidic residues.

The protein belongs to the ClpS family. In terms of assembly, binds to the N-terminal domain of the chaperone ClpA.

In terms of biological role, involved in the modulation of the specificity of the ClpAP-mediated ATP-dependent protein degradation. The sequence is that of ATP-dependent Clp protease adapter protein ClpS from Photorhabdus laumondii subsp. laumondii (strain DSM 15139 / CIP 105565 / TT01) (Photorhabdus luminescens subsp. laumondii).